The primary structure comprises 333 residues: Sodium/bile acid cotransporter 7 (333 aa).

At 1-10 (MGLLERLRKE) the chain is on the cytoplasmic side. A helical transmembrane segment spans residues 11–31 (WFIAGIALVIAAARLEPAVGV). At 32–37 (KGGPLK) the chain is on the extracellular side. The chain crosses the membrane as a helical span at residues 38–58 (PEITITYIAVSAIFFNSGLSL). The Cytoplasmic segment spans residues 59-71 (KTEELTSALMHVK). Residues 72 to 92 (LHLFVQIFTLVFFPTAIWLFL) traverse the membrane as a helical segment. Over 93-103 (QLLSITPINEW) the chain is Extracellular. The helical transmembrane segment at 104–124 (LLKGLQTVGCMPPPVSSAVIL) threads the bilayer. The Cytoplasmic segment spans residues 125 to 126 (TK). The helical transmembrane segment at 127-147 (AVGGNEAAAIFNSAFGSFLLG) threads the bilayer. Residues 148 to 151 (SSSS) lie on the Extracellular side of the membrane. A helical transmembrane segment spans residues 152-172 (VPFTSIFSQLFMTVVVPLIIG). Residues 173–189 (QIVRRYIKDWLERRKPP) lie on the Cytoplasmic side of the membrane. A helical membrane pass occupies residues 190-210 (FGTISSCVLLMIIYTTFCDTF). Residues 211–222 (ANPNIDLDKFSL) are Extracellular-facing. The helical transmembrane segment at 223–243 (IIIVFIIFSVQMSFMFLTFLF) threads the bilayer. Residues 244 to 258 (STRSNSGFTPADTVA) lie on the Cytoplasmic side of the membrane. Residues 259–279 (IIFCSTHKSLTLGIPMLKIVF) traverse the membrane as a helical segment. The Extracellular segment spans residues 280–286 (AGYEHLS). The chain crosses the membrane as a helical span at residues 287–307 (LISVPLLIYHPAQILLGSLLV). The Cytoplasmic portion of the chain corresponds to 308-333 (PTIKSWMVSRQKALKLTRQPKVPVKV).

It belongs to the bile acid:sodium symporter (BASS) (TC 2.A.28) family.

The protein resides in the cell membrane. It is found in the endoplasmic reticulum membrane. It localises to the golgi apparatus membrane. Its function is as follows. Involved in teeth and skeletal development. Has an essential role in the biosynthesis and trafficking of glycosaminoglycans and glycoproteins to produce a proper functioning extracellular matrix. Required for extracellular matrix mineralization. Also involved in the regulation of cellular calcium homeostasis. Does not show transport activity towards bile acids or steroid sulfates. This Gallus gallus (Chicken) protein is Sodium/bile acid cotransporter 7 (SLC10A7).